We begin with the raw amino-acid sequence, 113 residues long: Endoribonuclease SymE (113 aa).

A SpoVT-AbrB domain is found at 29 to 74 (SRYPDYSRIPAITLKGQWLEAAGFATGTVVDVKVMEGCIVLTAQPP).

It belongs to the SymE family.

The protein resides in the cytoplasm. Functionally, involved in the degradation and recycling of damaged RNA. It is itself a target for degradation by the ATP-dependent protease Lon. The sequence is that of Endoribonuclease SymE from Escherichia coli (strain 55989 / EAEC).